We begin with the raw amino-acid sequence, 64 residues long: MLILTRRVGETLMIGDQVSVTVLGVKGNQVRIGINAPKDVAVHREEIYERIKNEGDEGQATGGN.

The protein belongs to the CsrA/RsmA family. In terms of assembly, homodimer; the beta-strands of each monomer intercalate to form a hydrophobic core, while the alpha-helices form wings that extend away from the core.

The protein resides in the cytoplasm. Functionally, a key translational regulator that binds mRNA to regulate translation initiation and/or mRNA stability. Mediates global changes in gene expression, shifting from rapid growth to stress survival by linking envelope stress, the stringent response and the catabolite repression systems. Usually binds in the 5'-UTR; binding at or near the Shine-Dalgarno sequence prevents ribosome-binding, repressing translation, binding elsewhere in the 5'-UTR can activate translation and/or stabilize the mRNA. Its function is antagonized by small RNA(s). This chain is Translational regulator CsrA, found in Thioalkalivibrio sulfidiphilus (strain HL-EbGR7).